The chain runs to 384 residues: DNA replication and repair protein RecF (384 aa).

30 to 37 (GNNAQGKS) provides a ligand contact to ATP.

The protein belongs to the RecF family.

Its subcellular location is the cytoplasm. The RecF protein is involved in DNA metabolism; it is required for DNA replication and normal SOS inducibility. RecF binds preferentially to single-stranded, linear DNA. It also seems to bind ATP. The sequence is that of DNA replication and repair protein RecF from Gloeothece citriformis (strain PCC 7424) (Cyanothece sp. (strain PCC 7424)).